The following is a 170-amino-acid chain: Peptide deformylase (170 aa).

Fe cation contacts are provided by cysteine 91 and histidine 133. Glutamate 134 is a catalytic residue. Histidine 137 contacts Fe cation.

It belongs to the polypeptide deformylase family. Fe(2+) is required as a cofactor.

The catalysed reaction is N-terminal N-formyl-L-methionyl-[peptide] + H2O = N-terminal L-methionyl-[peptide] + formate. Its function is as follows. Removes the formyl group from the N-terminal Met of newly synthesized proteins. Requires at least a dipeptide for an efficient rate of reaction. N-terminal L-methionine is a prerequisite for activity but the enzyme has broad specificity at other positions. The sequence is that of Peptide deformylase from Aliivibrio fischeri (strain ATCC 700601 / ES114) (Vibrio fischeri).